A 359-amino-acid polypeptide reads, in one-letter code: 3-dehydroquinate synthase (359 aa).

NAD(+)-binding positions include 70–75 (DGEQYK), 105–109 (GVIGD), 129–130 (TT), K142, K151, and 169–172 (FYKT). E184, H247, and H264 together coordinate Zn(2+).

Belongs to the sugar phosphate cyclases superfamily. Dehydroquinate synthase family. Co(2+) serves as cofactor. Zn(2+) is required as a cofactor. The cofactor is NAD(+).

The protein localises to the cytoplasm. It carries out the reaction 7-phospho-2-dehydro-3-deoxy-D-arabino-heptonate = 3-dehydroquinate + phosphate. It participates in metabolic intermediate biosynthesis; chorismate biosynthesis; chorismate from D-erythrose 4-phosphate and phosphoenolpyruvate: step 2/7. In terms of biological role, catalyzes the conversion of 3-deoxy-D-arabino-heptulosonate 7-phosphate (DAHP) to dehydroquinate (DHQ). This is 3-dehydroquinate synthase from Francisella tularensis subsp. tularensis (strain WY96-3418).